We begin with the raw amino-acid sequence, 272 residues long: ATP synthase subunit a (272 aa).

The next 5 membrane-spanning stretches (helical) occupy residues 41–61 (TLNI…LALF), 102–122 (IAPL…MDLV), 147–167 (DVNI…FYSI), 212–232 (LFGN…LLPW), and 243–263 (AIFH…LTIV).

The protein belongs to the ATPase A chain family. F-type ATPases have 2 components, CF(1) - the catalytic core - and CF(0) - the membrane proton channel. CF(1) has five subunits: alpha(3), beta(3), gamma(1), delta(1), epsilon(1). CF(0) has three main subunits: a(1), b(2) and c(9-12). The alpha and beta chains form an alternating ring which encloses part of the gamma chain. CF(1) is attached to CF(0) by a central stalk formed by the gamma and epsilon chains, while a peripheral stalk is formed by the delta and b chains.

Its subcellular location is the cell inner membrane. Functionally, key component of the proton channel; it plays a direct role in the translocation of protons across the membrane. The chain is ATP synthase subunit a from Edwardsiella ictaluri (strain 93-146).